We begin with the raw amino-acid sequence, 57 residues long: Three-finger toxin Tschuditoxin-I (57 aa).

3 disulfides stabilise this stretch: cysteine 3/cysteine 22, cysteine 17/cysteine 39, and cysteine 41/cysteine 52.

Expressed by the venom gland.

It localises to the secreted. In terms of biological role, produces peripheral paralysis by blocking neuromuscular transmission at the postsynaptic site. Binds to and inhibits the endogenous nicotinic acetylcholine receptors (nAChR). This neurotoxin is lethal to mice by intraperitoneal or intravenous injection. This is Three-finger toxin Tschuditoxin-I from Micrurus tschudii (Desert coral snake).